A 426-amino-acid polypeptide reads, in one-letter code: Serine--tRNA ligase (426 aa).

Positions 1 to 15 (MIDVKDLSENPDKFR) are enriched in basic and acidic residues. Residues 1–22 (MIDVKDLSENPDKFRASQRARG) are disordered. Position 228-230 (228-230 (TSE)) interacts with L-serine. ATP is bound by residues 259–261 (RRE) and valine 275. Glutamate 282 is an L-serine binding site. 346-349 (ELTS) is an ATP binding site. Threonine 386 is a binding site for L-serine.

Belongs to the class-II aminoacyl-tRNA synthetase family. Type-1 seryl-tRNA synthetase subfamily. Homodimer. The tRNA molecule binds across the dimer.

It is found in the cytoplasm. The catalysed reaction is tRNA(Ser) + L-serine + ATP = L-seryl-tRNA(Ser) + AMP + diphosphate + H(+). It catalyses the reaction tRNA(Sec) + L-serine + ATP = L-seryl-tRNA(Sec) + AMP + diphosphate + H(+). Its pathway is aminoacyl-tRNA biosynthesis; selenocysteinyl-tRNA(Sec) biosynthesis; L-seryl-tRNA(Sec) from L-serine and tRNA(Sec): step 1/1. Catalyzes the attachment of serine to tRNA(Ser). Is also able to aminoacylate tRNA(Sec) with serine, to form the misacylated tRNA L-seryl-tRNA(Sec), which will be further converted into selenocysteinyl-tRNA(Sec). In Pseudarthrobacter chlorophenolicus (strain ATCC 700700 / DSM 12829 / CIP 107037 / JCM 12360 / KCTC 9906 / NCIMB 13794 / A6) (Arthrobacter chlorophenolicus), this protein is Serine--tRNA ligase.